Consider the following 132-residue polypeptide: Prefoldin subunit alpha (132 aa).

This sequence belongs to the prefoldin subunit alpha family. As to quaternary structure, heterohexamer of two alpha and four beta subunits.

It localises to the cytoplasm. Functionally, molecular chaperone capable of stabilizing a range of proteins. Seems to fulfill an ATP-independent, HSP70-like function in archaeal de novo protein folding. The sequence is that of Prefoldin subunit alpha (pfdA) from Pyrobaculum aerophilum (strain ATCC 51768 / DSM 7523 / JCM 9630 / CIP 104966 / NBRC 100827 / IM2).